The following is a 340-amino-acid chain: Probable glucan endo-1,3-beta-glucosidase BG1 (340 aa).

The first 25 residues, 1–25, serve as a signal peptide directing secretion; sequence MDLRFLASLTLLLGLFFVNTNPTGG. The active-site Proton donor is glutamate 120. Residue glutamate 262 is the Nucleophile of the active site.

This sequence belongs to the glycosyl hydrolase 17 family.

The protein localises to the secreted. It carries out the reaction Hydrolysis of (1-&gt;3)-beta-D-glucosidic linkages in (1-&gt;3)-beta-D-glucans.. Its function is as follows. May play a role in plant defense against pathogens. The protein is Probable glucan endo-1,3-beta-glucosidase BG1 of Arabidopsis thaliana (Mouse-ear cress).